We begin with the raw amino-acid sequence, 345 residues long: Dihydroorotate dehydrogenase (quinone) (345 aa).

Residues 65-69 (AGLDK) and threonine 89 contribute to the FMN site. Lysine 69 contacts substrate. Position 114–118 (114–118 (NRMGF)) interacts with substrate. Residues asparagine 142 and asparagine 175 each contribute to the FMN site. Asparagine 175 is a substrate binding site. Residue serine 178 is the Nucleophile of the active site. Residue asparagine 180 participates in substrate binding. Lysine 220 and threonine 248 together coordinate FMN. Residue 249 to 250 (NT) participates in substrate binding. FMN-binding positions include glycine 271, glycine 300, and 321–322 (YT).

This sequence belongs to the dihydroorotate dehydrogenase family. Type 2 subfamily. In terms of assembly, monomer. The cofactor is FMN.

The protein localises to the cell membrane. It carries out the reaction (S)-dihydroorotate + a quinone = orotate + a quinol. It participates in pyrimidine metabolism; UMP biosynthesis via de novo pathway; orotate from (S)-dihydroorotate (quinone route): step 1/1. Its function is as follows. Catalyzes the conversion of dihydroorotate to orotate with quinone as electron acceptor. This Burkholderia lata (strain ATCC 17760 / DSM 23089 / LMG 22485 / NCIMB 9086 / R18194 / 383) protein is Dihydroorotate dehydrogenase (quinone).